An 858-amino-acid chain; its full sequence is Bifunctional uridylyltransferase/uridylyl-removing enzyme (858 aa).

Positions 1 to 324 (MSASVAEPPP…PATSGVTRVL (324 aa)) are uridylyltransferase. A uridylyl-removing region spans residues 325–681 (SPGRFVEKQG…ARPSPVGDAL (357 aa)). In terms of domain architecture, HD spans 443-565 (VDQHILMVLR…VGSERRLTAL (123 aa)). 2 ACT domains span residues 682–761 (QVLV…PEPS) and 790–858 (ILSV…AIAV).

The protein belongs to the GlnD family. It depends on Mg(2+) as a cofactor.

It catalyses the reaction [protein-PII]-L-tyrosine + UTP = [protein-PII]-uridylyl-L-tyrosine + diphosphate. The catalysed reaction is [protein-PII]-uridylyl-L-tyrosine + H2O = [protein-PII]-L-tyrosine + UMP + H(+). Its activity is regulated as follows. Uridylyltransferase (UTase) activity is inhibited by glutamine, while glutamine activates uridylyl-removing (UR) activity. In terms of biological role, modifies, by uridylylation and deuridylylation, the PII regulatory proteins (GlnB and homologs), in response to the nitrogen status of the cell that GlnD senses through the glutamine level. Under low glutamine levels, catalyzes the conversion of the PII proteins and UTP to PII-UMP and PPi, while under higher glutamine levels, GlnD hydrolyzes PII-UMP to PII and UMP (deuridylylation). Thus, controls uridylylation state and activity of the PII proteins, and plays an important role in the regulation of nitrogen assimilation and metabolism. In Burkholderia mallei (strain ATCC 23344), this protein is Bifunctional uridylyltransferase/uridylyl-removing enzyme.